Here is a 146-residue protein sequence, read N- to C-terminus: Hemoglobin subunit beta (146 aa).

The Globin domain occupies 2–146 (HWSAEEKQLI…VAHALARKYH (145 aa)). Residues H63 and H92 each coordinate heme b.

It belongs to the globin family. Heterotetramer of two alpha chains and two beta chains. As to expression, red blood cells.

In terms of biological role, involved in oxygen transport from the lung to the various peripheral tissues. This chain is Hemoglobin subunit beta (HBB), found in Streptopelia orientalis (Eastern turtle dove).